The primary structure comprises 392 residues: uncharacterized protein (392 aa).

This sequence belongs to the glycosyltransferase group 1 family. Glycosyltransferase 4 subfamily.

This is an uncharacterized protein from Methanocaldococcus jannaschii (strain ATCC 43067 / DSM 2661 / JAL-1 / JCM 10045 / NBRC 100440) (Methanococcus jannaschii).